A 411-amino-acid chain; its full sequence is Imidazolonepropionase (411 aa).

Fe(3+)-binding residues include His78 and His80. The Zn(2+) site is built by His78 and His80. 4-imidazolone-5-propanoate-binding residues include Arg87, Tyr150, and His183. N-formimidoyl-L-glutamate is bound at residue Tyr150. His248 lines the Fe(3+) pocket. His248 lines the Zn(2+) pocket. Gln251 provides a ligand contact to 4-imidazolone-5-propanoate. Asp322 contacts Fe(3+). Residue Asp322 participates in Zn(2+) binding. Asn324 and Gly326 together coordinate N-formimidoyl-L-glutamate. Thr327 lines the 4-imidazolone-5-propanoate pocket.

Belongs to the metallo-dependent hydrolases superfamily. HutI family. It depends on Zn(2+) as a cofactor. Requires Fe(3+) as cofactor.

It localises to the cytoplasm. It carries out the reaction 4-imidazolone-5-propanoate + H2O = N-formimidoyl-L-glutamate. It functions in the pathway amino-acid degradation; L-histidine degradation into L-glutamate; N-formimidoyl-L-glutamate from L-histidine: step 3/3. Catalyzes the hydrolytic cleavage of the carbon-nitrogen bond in imidazolone-5-propanoate to yield N-formimidoyl-L-glutamate. It is the third step in the universal histidine degradation pathway. This Flavobacterium psychrophilum (strain ATCC 49511 / DSM 21280 / CIP 103535 / JIP02/86) protein is Imidazolonepropionase.